The following is a 549-amino-acid chain: MKRVLTALAATLPFAANAADAISGAVERQPTNWQAIVMFLIFVVFTLGITYWASKRVRSRSDYYTAGGNITGFQNGLAIAGDYMSAASFLGISALVFTSGYDGLIYSLGFLVGWPIILFLIAERLRNLGRYTFADVASYRLKQGPIRILSACGSLVVVALYLIAQMVGAGKLIELLFGLNYHIAVVLVGVLMMMYVLFGGMLATTWVQIIKAVLLLFGASFMAFMVMKHVGFSFNNLFTEAMAVHPKGSAIMSPGGLVNDPISALSLGLGLMFGTAGLPHILMRFFTVSDAREARKSVFYATGFMGYFYILTFIIGFGAIMLVGANPEYKDAAGALIGGNNMAAVHLANAVGGNLFLGFISAVAFATILAVVAGLTLAGASAVSHDLYANVFRKGATEREELRVSKITVLVLGVIAIILGVLFENQNIAFMVGLAFAIAASCNFPIILLSMYWSKLTTRGAMMGGWLGLVTAVVLMVLGPTIWVQILGHEKAIFPYEYPALFSISVAFIGIWFFSATDNSAEGNREREQFRAQFIRSQTGYGVEQGRAH.

13 helical membrane passes run 33-53, 77-97, 103-123, 148-168, 183-203, 206-226, 262-282, 303-323, 355-375, 404-424, 428-448, 464-484, and 493-513; these read WQAI…TYWA, LAIA…ALVF, GLIY…LIAE, ILSA…QMVG, IAVV…GMLA, WVQI…AFMV, ISAL…PHIL, GFMG…IMLV, LFLG…VAGL, VSKI…VLFE, IAFM…PIIL, GGWL…TIWV, and IFPY…GIWF.

It belongs to the sodium:solute symporter (SSF) (TC 2.A.21) family.

The protein localises to the cell inner membrane. Transports acetate. The sequence is that of Cation/acetate symporter ActP from Citrobacter koseri (strain ATCC BAA-895 / CDC 4225-83 / SGSC4696).